Here is a 282-residue protein sequence, read N- to C-terminus: Probable endonuclease 4 (282 aa).

Zn(2+)-binding residues include histidine 69, histidine 109, glutamate 144, aspartate 178, histidine 181, histidine 215, aspartate 228, histidine 230, and glutamate 260.

Belongs to the AP endonuclease 2 family. Zn(2+) serves as cofactor.

The catalysed reaction is Endonucleolytic cleavage to 5'-phosphooligonucleotide end-products.. Endonuclease IV plays a role in DNA repair. It cleaves phosphodiester bonds at apurinic or apyrimidinic (AP) sites, generating a 3'-hydroxyl group and a 5'-terminal sugar phosphate. This Thermosipho africanus (strain TCF52B) protein is Probable endonuclease 4.